Here is a 456-residue protein sequence, read N- to C-terminus: Bifunctional protein GlmU (456 aa).

The segment at 1–229 is pyrophosphorylase; that stretch reads MLNNAMSVVI…LSEVEGVNNR (229 aa). UDP-N-acetyl-alpha-D-glucosamine is bound by residues 11–14, lysine 25, glutamine 76, 81–82, 103–105, glycine 140, glutamate 154, asparagine 169, and asparagine 227; these read LAAG, GT, and YGD. Aspartate 105 is a Mg(2+) binding site. Asparagine 227 is a Mg(2+) binding site. The tract at residues 230–250 is linker; the sequence is LQLSRLERVYQSEQAEKLLLA. The interval 251 to 456 is N-acetyltransferase; the sequence is GVMLRDPARF…EGWRRPVKKK (206 aa). Residues arginine 333 and lysine 351 each coordinate UDP-N-acetyl-alpha-D-glucosamine. Histidine 363 functions as the Proton acceptor in the catalytic mechanism. Positions 366 and 377 each coordinate UDP-N-acetyl-alpha-D-glucosamine. Residues alanine 380, 386–387, serine 405, alanine 423, and arginine 440 each bind acetyl-CoA; that span reads NY.

This sequence in the N-terminal section; belongs to the N-acetylglucosamine-1-phosphate uridyltransferase family. It in the C-terminal section; belongs to the transferase hexapeptide repeat family. In terms of assembly, homotrimer. The cofactor is Mg(2+).

Its subcellular location is the cytoplasm. It catalyses the reaction alpha-D-glucosamine 1-phosphate + acetyl-CoA = N-acetyl-alpha-D-glucosamine 1-phosphate + CoA + H(+). The catalysed reaction is N-acetyl-alpha-D-glucosamine 1-phosphate + UTP + H(+) = UDP-N-acetyl-alpha-D-glucosamine + diphosphate. The protein operates within nucleotide-sugar biosynthesis; UDP-N-acetyl-alpha-D-glucosamine biosynthesis; N-acetyl-alpha-D-glucosamine 1-phosphate from alpha-D-glucosamine 6-phosphate (route II): step 2/2. It participates in nucleotide-sugar biosynthesis; UDP-N-acetyl-alpha-D-glucosamine biosynthesis; UDP-N-acetyl-alpha-D-glucosamine from N-acetyl-alpha-D-glucosamine 1-phosphate: step 1/1. Its pathway is bacterial outer membrane biogenesis; LPS lipid A biosynthesis. Functionally, catalyzes the last two sequential reactions in the de novo biosynthetic pathway for UDP-N-acetylglucosamine (UDP-GlcNAc). The C-terminal domain catalyzes the transfer of acetyl group from acetyl coenzyme A to glucosamine-1-phosphate (GlcN-1-P) to produce N-acetylglucosamine-1-phosphate (GlcNAc-1-P), which is converted into UDP-GlcNAc by the transfer of uridine 5-monophosphate (from uridine 5-triphosphate), a reaction catalyzed by the N-terminal domain. This Escherichia coli (strain 55989 / EAEC) protein is Bifunctional protein GlmU.